A 399-amino-acid chain; its full sequence is F420-dependent formate dehydrogenase subunit beta (399 aa).

2 4Fe-4S ferredoxin-type domains span residues 287–307 (TEYM…EACP) and 339–367 (ERML…LAKI). The [4Fe-4S] cluster site is built by C296, C299, C302, C306, C348, C351, C354, and C358.

The protein belongs to the FrhB family. As to quaternary structure, dimer of an alpha (FdhA) and a beta (FdhB) subunit. [4Fe-4S] cluster is required as a cofactor. The cofactor is FAD. It depends on Zn(2+) as a cofactor.

The enzyme catalyses oxidized coenzyme F420-(gamma-L-Glu)(n) + formate + 2 H(+) = reduced coenzyme F420-(gamma-L-Glu)(n) + CO2. Is extremely sensitive to oxygen. Contains a FAD that is required for coenzyme F420-dependent activity but not for methyl viologen-dependent activity. Preincubation of the FAD-depleted enzyme with FAD restores coenzyme F420-dependent activity. Neither FMN nor FADH2 can replace FAD. Strongly inhibited by cyanide, azide, alpha,alpha-dipyridyl and 1,10-phenanthroline. Functionally, catalyzes the oxidation of formate to carbon dioxide, with coenzyme F420 as the electron acceptor. In vitro can also use methyl viologen, 7,8-didemethyl-8-hydroxy-5-deazariboflavin (or FO, a hydrolytic derivative of coenzyme F420), FMN and FAD as electron acceptors, but not NAD(+) or NADP(+). This chain is F420-dependent formate dehydrogenase subunit beta, found in Methanobacterium formicicum.